Consider the following 288-residue polypeptide: Bifunctional protein FolD (288 aa).

Residues 166–168 (GAS) and I232 each bind NADP(+).

Belongs to the tetrahydrofolate dehydrogenase/cyclohydrolase family. Homodimer.

It catalyses the reaction (6R)-5,10-methylene-5,6,7,8-tetrahydrofolate + NADP(+) = (6R)-5,10-methenyltetrahydrofolate + NADPH. It carries out the reaction (6R)-5,10-methenyltetrahydrofolate + H2O = (6R)-10-formyltetrahydrofolate + H(+). Its pathway is one-carbon metabolism; tetrahydrofolate interconversion. Functionally, catalyzes the oxidation of 5,10-methylenetetrahydrofolate to 5,10-methenyltetrahydrofolate and then the hydrolysis of 5,10-methenyltetrahydrofolate to 10-formyltetrahydrofolate. The sequence is that of Bifunctional protein FolD from Escherichia coli (strain SMS-3-5 / SECEC).